The chain runs to 172 residues: Small ribosomal subunit protein uS5 (172 aa).

Positions Leu-17–Val-80 constitute an S5 DRBM domain.

Belongs to the universal ribosomal protein uS5 family. As to quaternary structure, part of the 30S ribosomal subunit. Contacts proteins S4 and S8.

Functionally, with S4 and S12 plays an important role in translational accuracy. Its function is as follows. Located at the back of the 30S subunit body where it stabilizes the conformation of the head with respect to the body. This is Small ribosomal subunit protein uS5 from Ralstonia nicotianae (strain ATCC BAA-1114 / GMI1000) (Ralstonia solanacearum).